The following is a 227-amino-acid chain: Cytochrome c oxidase subunit 2 (227 aa).

Over 1–14 the chain is Mitochondrial intermembrane; that stretch reads MAYSFQLGLQDATS. The chain crosses the membrane as a helical span at residues 15–45; sequence PIMEELMNFHDHTLMIVFLISSLVLYIISLM. Over 46-59 the chain is Mitochondrial matrix; the sequence is LTTKLTHTSTMDAQ. A helical membrane pass occupies residues 60 to 87; it reads EVETIWTILPAVILIMIALPSLRILYMM. Residues 88–227 lie on the Mitochondrial intermembrane side of the membrane; sequence DEINNPVLTV…HFENWSASMI (140 aa). Residues H161, C196, E198, C200, H204, and M207 each coordinate Cu cation. Position 198 (E198) interacts with Mg(2+).

The protein belongs to the cytochrome c oxidase subunit 2 family. In terms of assembly, component of the cytochrome c oxidase (complex IV, CIV), a multisubunit enzyme composed of 14 subunits. The complex is composed of a catalytic core of 3 subunits MT-CO1, MT-CO2 and MT-CO3, encoded in the mitochondrial DNA, and 11 supernumerary subunits COX4I, COX5A, COX5B, COX6A, COX6B, COX6C, COX7A, COX7B, COX7C, COX8 and NDUFA4, which are encoded in the nuclear genome. The complex exists as a monomer or a dimer and forms supercomplexes (SCs) in the inner mitochondrial membrane with NADH-ubiquinone oxidoreductase (complex I, CI) and ubiquinol-cytochrome c oxidoreductase (cytochrome b-c1 complex, complex III, CIII), resulting in different assemblies (supercomplex SCI(1)III(2)IV(1) and megacomplex MCI(2)III(2)IV(2)). Found in a complex with TMEM177, COA6, COX18, COX20, SCO1 and SCO2. Interacts with TMEM177 in a COX20-dependent manner. Interacts with COX20. Interacts with COX16. Cu cation is required as a cofactor.

Its subcellular location is the mitochondrion inner membrane. It catalyses the reaction 4 Fe(II)-[cytochrome c] + O2 + 8 H(+)(in) = 4 Fe(III)-[cytochrome c] + 2 H2O + 4 H(+)(out). Functionally, component of the cytochrome c oxidase, the last enzyme in the mitochondrial electron transport chain which drives oxidative phosphorylation. The respiratory chain contains 3 multisubunit complexes succinate dehydrogenase (complex II, CII), ubiquinol-cytochrome c oxidoreductase (cytochrome b-c1 complex, complex III, CIII) and cytochrome c oxidase (complex IV, CIV), that cooperate to transfer electrons derived from NADH and succinate to molecular oxygen, creating an electrochemical gradient over the inner membrane that drives transmembrane transport and the ATP synthase. Cytochrome c oxidase is the component of the respiratory chain that catalyzes the reduction of oxygen to water. Electrons originating from reduced cytochrome c in the intermembrane space (IMS) are transferred via the dinuclear copper A center (CU(A)) of subunit 2 and heme A of subunit 1 to the active site in subunit 1, a binuclear center (BNC) formed by heme A3 and copper B (CU(B)). The BNC reduces molecular oxygen to 2 water molecules using 4 electrons from cytochrome c in the IMS and 4 protons from the mitochondrial matrix. The chain is Cytochrome c oxidase subunit 2 (MT-CO2) from Praomys jacksoni (African forest rat).